We begin with the raw amino-acid sequence, 518 residues long: Zinc finger protein 449 (518 aa).

One can recognise an SCAN box domain in the interval 30–112 (RQRFRQFQYR…SLIEDLQREL (83 aa)). Residues 292–304 (NPTLGETPENSNL) show a composition bias toward polar residues. Residues 292 to 325 (NPTLGETPENSNLEEPLNPKPHKKKSPGEKPHRC) are disordered. C2H2-type zinc fingers lie at residues 323–345 (HRCP…QRIH), 351–373 (HKCP…QRLH), 379–401 (YECT…QRTH), 407–429 (YKCL…LKTH), 435–457 (HRCH…QRTH), 463–485 (FKCN…LRIH), and 491–513 (YKCT…QVTH).

The protein belongs to the krueppel C2H2-type zinc-finger protein family.

It is found in the nucleus. Functionally, may be involved in transcriptional regulation. The protein is Zinc finger protein 449 (ZNF449) of Gorilla gorilla gorilla (Western lowland gorilla).